A 433-amino-acid chain; its full sequence is Type I acyl-CoA thioesterase mpaH' (433 aa).

The interval 58–246 is abhydrolase domain; the sequence is HGVGLPKELY…IKALFGTTAD (189 aa). A substrate-binding site is contributed by Val60. Ser139 serves as the catalytic Nucleophile. Substrate is bound at residue Phe140. Residues Asp163 and His365 contribute to the active site.

The protein belongs to the AB hydrolase superfamily. MpaH hydrolase family. In terms of assembly, homodimer.

It is found in the peroxisome matrix. The enzyme catalyses mycophenolyl-CoA + H2O = mycophenolate + CoA + H(+). The protein operates within secondary metabolite biosynthesis; terpenoid biosynthesis. Functionally, type I acyl-CoA thioesterase; part of the gene cluster that mediates the biosynthesis of mycophenolic acid (MPA), the first isolated antibiotic natural product in the world obtained from a culture of Penicillium brevicompactum in 1893. MpaH' acts as a peroxisomal acyl-CoA hydrolase that converts MPA-CoA into the final product MPA. The first step of the pathway is the synthesis of 5-methylorsellinic acid (5MOA) by the cytosolic polyketide synthase mpaC. 5MOA is then converted to the phthalide compound 5,7-dihydroxy-4,6-dimethylphthalide (DHMP) by the endoplasmic reticulum-bound cytochrome P450 monooxygenase mpaDE. MpaDE first catalyzes hydroxylation of 5-MOA to 4,6-dihydroxy-2-(hydroxymethyl)-3-methylbenzoic acid (DHMB). MpaDE then acts as a lactone synthase that catalyzes the ring closure to convert DHMB into DHMP. The next step is the prenylation of DHMP by the Golgi apparatus-associated prenyltransferase mpaA to yield farnesyl-DHMP (FDHMP). The ER-bound oxygenase mpaB then mediates the oxidative cleavage the C19-C20 double bond in FDHMP to yield FDHMP-3C via a mycophenolic aldehyde intermediate. The O-methyltransferase mpaG catalyzes the methylation of FDHMP-3C to yield MFDHMP-3C. After the cytosolic methylation of FDHMP-3C, MFDHMP-3C enters into peroxisomes probably via free diffusion due to its low molecular weight. Upon a peroxisomal CoA ligation reaction, catalyzed by a beta-oxidation component enzyme acyl-CoA ligase ACL891, MFDHMP-3C-CoA would then be restricted to peroxisomes for the following beta-oxidation pathway steps. The peroxisomal beta-oxidation machinery than converts MFDHMP-3C-CoA into MPA_CoA, via a beta-oxidation chain-shortening process. Finally mpaH acts as a peroxisomal acyl-CoA hydrolase with high substrate specificity toward MPA-CoA to release the final product MPA. This chain is Type I acyl-CoA thioesterase mpaH', found in Penicillium brevicompactum.